The following is a 380-amino-acid chain: Large ribosomal subunit protein mL38 (380 aa).

A mitochondrion-targeting transit peptide spans 1–26; that stretch reads MAAPWWRAAFSVTGRCRGISTSASLS. Positions 98-123 form a coiled coil; the sequence is SRTQKLQERKRFLQELRANSEEERAA.

Belongs to the phosphatidylethanolamine-binding protein family. Mitochondrion-specific ribosomal protein mL38 subfamily. Component of the mitochondrial ribosome large subunit (39S) which comprises a 16S rRNA and about 50 distinct proteins.

The protein resides in the mitochondrion. This chain is Large ribosomal subunit protein mL38 (Mrpl38), found in Rattus norvegicus (Rat).